We begin with the raw amino-acid sequence, 167 residues long: Elafin (167 aa).

Positions 1–21 (MRSRSFLVLVVVFLICGTLVA) are cleaved as a signal peptide. Positions 22–70 (QAAGRIRRPKGKGTKKILALVKGQGPVRGKDQVKGQGPVKGQDLGKSQD) are excised as a propeptide. 12 repeat units span residues 44 to 49 (GQGPVR), 50 to 55 (GKDQVK), 56 to 61 (GQGPVK), 62 to 67 (GQDLGK), 68 to 73 (SQDPVK), 74 to 79 (AQLPDK), 80 to 85 (GQDLGK), 86 to 91 (GEDSVK), 92 to 97 (GQDPFK), 98 to 103 (AQLPDK), 104 to 109 (LQDPVK), and 110 to 115 (AQPAIK). The interval 44–115 (GQGPVRGKDQ…DPVKAQPAIK (72 aa)) is 12 X 6 AA tandem repeats of [GSAL]-[QEK]-[DGLP]-[APSLQ]-[VGDFI]-[KR]. The disordered stretch occupies residues 46–104 (GPVRGKDQVKGQGPVKGQDLGKSQDPVKAQLPDKGQDLGKGEDSVKGQDPFKAQLPDKL). The interval 78–126 (DKGQDLGKGEDSVKGQDPFKAQLPDKLQDPVKAQPAIKRLILLTKPGSC) is 2 X tandem repeats of SVP-1 like motif. Over residues 79–91 (KGQDLGKGEDSVK) the composition is skewed to basic and acidic residues. 2 SVP-1 clotting repeats span residues 80–101 (GQDLGKGEDSVKGQDPFKAQLP) and 104–126 (LQDPVKAQPAIKRLILLTKPGSC). Residues 119-167 (LLTKPGSCPRILIRCLMVNPPNRCLSDAQCPGLKKCCEGFCGKACMDPK) form the WAP domain. 4 disulfides stabilise this stretch: cysteine 126/cysteine 155, cysteine 133/cysteine 159, cysteine 142/cysteine 154, and cysteine 148/cysteine 163.

Trachea and large intestine.

Functionally, neutrophil and pancreatic elastase-specific inhibitor of skin. It may prevent elastase-mediated tissue proteolysis. In Sus scrofa (Pig), this protein is Elafin.